The primary structure comprises 150 residues: Large ribosomal subunit protein uL15 (150 aa).

The segment at 1–58 (MNLSGIKPPKGQVKTKKRIGRGMGSGHGKTATRGSKGQHAGTGFSQKRGFEGGQMPLH) is disordered.

It belongs to the universal ribosomal protein uL15 family. In terms of assembly, part of the 50S ribosomal subunit.

In terms of biological role, binds to the 23S rRNA. The chain is Large ribosomal subunit protein uL15 from Solibacter usitatus (strain Ellin6076).